A 182-amino-acid polypeptide reads, in one-letter code: Thioredoxin F-type, chloroplastic (182 aa).

The N-terminal 69 residues, M1–G69, are a transit peptide targeting the chloroplast. A Thioredoxin domain is found at P70–S181. Residues C106 and C109 each act as nucleophile in the active site. A disulfide bridge connects residues C106 and C109.

Belongs to the thioredoxin family. Plant F-type subfamily. As to quaternary structure, forms a complex with heterodimeric ferredoxin-thioredoxin reductase (FTR) and ferredoxin.

It is found in the plastid. The protein localises to the chloroplast. Functionally, participates in various redox reactions through the reversible oxidation of the active center dithiol to a disulfide. The F form is known to activate a number of enzymes of the photosynthetic carbon cycle. This is Thioredoxin F-type, chloroplastic from Pisum sativum (Garden pea).